Here is a 173-residue protein sequence, read N- to C-terminus: Shikimate kinase 1 (173 aa).

ATP is bound at residue 14–19 (GAGKST). Serine 18 contributes to the Mg(2+) binding site. Substrate-binding residues include aspartate 36, arginine 60, and glycine 82. Arginine 120 provides a ligand contact to ATP. Substrate is bound at residue arginine 140. Glutamine 157 contacts ATP.

The protein belongs to the shikimate kinase family. Monomer. The cofactor is Mg(2+).

The protein resides in the cytoplasm. It carries out the reaction shikimate + ATP = 3-phosphoshikimate + ADP + H(+). The protein operates within metabolic intermediate biosynthesis; chorismate biosynthesis; chorismate from D-erythrose 4-phosphate and phosphoenolpyruvate: step 5/7. Functionally, catalyzes the specific phosphorylation of the 3-hydroxyl group of shikimic acid using ATP as a cosubstrate. This chain is Shikimate kinase 1, found in Erwinia tasmaniensis (strain DSM 17950 / CFBP 7177 / CIP 109463 / NCPPB 4357 / Et1/99).